We begin with the raw amino-acid sequence, 300 residues long: N-acetylmuramic acid 6-phosphate etherase (300 aa).

An SIS domain is found at 57 to 220 (IAVAFQCGGR…TTGAMIRTGK (164 aa)). Glu85 serves as the catalytic Proton donor. Glu116 is a catalytic residue.

Belongs to the GCKR-like family. MurNAc-6-P etherase subfamily. Homodimer.

The catalysed reaction is N-acetyl-D-muramate 6-phosphate + H2O = N-acetyl-D-glucosamine 6-phosphate + (R)-lactate. It participates in amino-sugar metabolism; 1,6-anhydro-N-acetylmuramate degradation. The protein operates within amino-sugar metabolism; N-acetylmuramate degradation. It functions in the pathway cell wall biogenesis; peptidoglycan recycling. Specifically catalyzes the cleavage of the D-lactyl ether substituent of MurNAc 6-phosphate, producing GlcNAc 6-phosphate and D-lactate. Together with AnmK, is also required for the utilization of anhydro-N-acetylmuramic acid (anhMurNAc) either imported from the medium or derived from its own cell wall murein, and thus plays a role in cell wall recycling. This is N-acetylmuramic acid 6-phosphate etherase from Aliivibrio salmonicida (strain LFI1238) (Vibrio salmonicida (strain LFI1238)).